We begin with the raw amino-acid sequence, 464 residues long: Vitamin D3 hydroxylase-associated protein (464 aa).

Residues K150 and S225 each act as charge relay system in the active site. Residue S249 is the Acyl-ester intermediate of the active site.

The protein belongs to the amidase family. As to expression, kidney.

It localises to the mitochondrion inner membrane. In terms of biological role, may have a vitamin D3 hydroxylase regulatory function. The polypeptide is Vitamin D3 hydroxylase-associated protein (Gallus gallus (Chicken)).